Here is a 76-residue protein sequence, read N- to C-terminus: DNA-directed RNA polymerase subunit omega (76 aa).

The protein belongs to the RNA polymerase subunit omega family. In cyanobacteria the RNAP catalytic core is composed of 2 alpha, 1 beta, 1 beta', 1 gamma and 1 omega subunit. When a sigma factor is associated with the core the holoenzyme is formed, which can initiate transcription.

It carries out the reaction RNA(n) + a ribonucleoside 5'-triphosphate = RNA(n+1) + diphosphate. Its function is as follows. Promotes RNA polymerase assembly. Latches the N- and C-terminal regions of the beta' subunit thereby facilitating its interaction with the beta and alpha subunits. The polypeptide is DNA-directed RNA polymerase subunit omega (Synechococcus elongatus (strain ATCC 33912 / PCC 7942 / FACHB-805) (Anacystis nidulans R2)).